The following is a 389-amino-acid chain: Putative sugar efflux transporter DR_1322 (389 aa).

12 helical membrane-spanning segments follow: residues 10-30 (AVLLLGLATSLAGPFMSLFAV), 34-54 (GMTPLQLGLFLTFNALSAVLV), 69-89 (KPLVLLTLAAGVLAYLALSGV), 96-116 (MATGVLLLAVSSAAFPQVFAF), 135-155 (VLRAVFSFAWVVGPGVGAAVL), 161-181 (SGVFLLAALCYALAGLPLLFI), 211-231 (GWVVAAFTLYGMAMHMGMVMF), 246-266 (VGFLVGLCALLEIPVMLLFVL), 281-301 (LLLFVVHFALIYLAQGMPLLI), 308-328 (AAVLAVMAGLGMTYFQQLMPG), 341-361 (SVVGSMLSGIVAGAWAQVFGY), and 363-383 (PVFLLCAALSLAAWGMMLWAT).

The protein belongs to the major facilitator superfamily. Set transporter family.

It localises to the cell membrane. In terms of biological role, involved in the efflux of sugars. The physiological role may be the detoxification of non-metabolizable sugar analogs. The protein is Putative sugar efflux transporter DR_1322 of Deinococcus radiodurans (strain ATCC 13939 / DSM 20539 / JCM 16871 / CCUG 27074 / LMG 4051 / NBRC 15346 / NCIMB 9279 / VKM B-1422 / R1).